The sequence spans 39 residues: Cecropin-D-like peptide (39 aa).

In terms of tissue distribution, hemolymph.

The protein resides in the secreted. Cecropins have lytic and antibacterial activity against several Gram-positive and Gram-negative bacteria. Has antibacterial activity against the Gram-positive bacteria M.luteus (MIC=34.4 uM), L.monocytogenes (MIC=34.4 uM), and S.lutea (MIC=34.4 uM), and the Gram-negative bacterium E.coli D31 (MIC=8.6 uM). Lacks antibacterial activity against the Gram-positive bacterium B.circulans, and the Gram-negative bacteria E.coli ATCC 25922 and S.typhimurium. Has antifungal activity against A.niger, but lacks antifungal activity against C.albicans, C.wickerhamii, F.oxysporum, P.pastoris, P.tannophilus, S.cerevisiae, T.harzianum, and Z.marxianus. The sequence is that of Cecropin-D-like peptide from Galleria mellonella (Greater wax moth).